An 862-amino-acid chain; its full sequence is Squamosa promoter-binding-like protein 1 (862 aa).

The interval 55 to 98 (KRRRVSPEDDDGEECINAATTNGDDGQISGQRGRSSEDEMPRQG) is disordered. Residues 72–87 (AATTNGDDGQISGQRG) show a composition bias toward polar residues. The SBP-type zinc finger occupies 104-181 (GPCCQVDGCT…AQHNRRRRKV (78 aa)). Zn(2+) contacts are provided by cysteine 107, cysteine 112, cysteine 129, histidine 132, cysteine 148, cysteine 151, histidine 155, and cysteine 167. A Bipartite nuclear localization signal motif is present at residues 164 to 180 (KKSCRSRLAQHNRRRRK).

In terms of tissue distribution, ubiquitous.

The protein localises to the nucleus. In terms of biological role, trans-acting factor that binds specifically to the consensus nucleotide sequence 5'-TNCGTACAA-3'. The sequence is that of Squamosa promoter-binding-like protein 1 (SPL1) from Oryza sativa subsp. japonica (Rice).